The chain runs to 475 residues: Bifunctional aspartate aminotransferase and glutamate/aspartate-prephenate aminotransferase (475 aa).

Residues 1-55 (MASQSSVAVISSAAARGESFPDSKKPIGSVRFQQPLRLSFSYCKSGNMSSRICAM) constitute a chloroplast transit peptide. Residues Gly107, Trp193, and Asn243 each coordinate L-aspartate. Lys306 bears the N6-(pyridoxal phosphate)lysine mark. L-aspartate is bound at residue Arg445.

Belongs to the class-I pyridoxal-phosphate-dependent aminotransferase family. Homodimer. It depends on pyridoxal 5'-phosphate as a cofactor.

Its subcellular location is the plastid. The protein resides in the chloroplast. It carries out the reaction L-aspartate + 2-oxoglutarate = oxaloacetate + L-glutamate. The catalysed reaction is L-arogenate + oxaloacetate = prephenate + L-aspartate. It catalyses the reaction L-arogenate + 2-oxoglutarate = prephenate + L-glutamate. It participates in amino-acid biosynthesis; L-phenylalanine biosynthesis; L-arogenate from prephenate (L-Asp route): step 1/1. Its pathway is amino-acid biosynthesis; L-phenylalanine biosynthesis; L-arogenate from prephenate (L-Glu route): step 1/1. In terms of biological role, prokaryotic-type aspartate aminotransferase. Also has a prenate transaminase activity. Involved in the aromatic amino acids biosynthesis pathway via the arogenate route. Required for the transamination of prephenate into arogenate. Required for early development of the embryo. This chain is Bifunctional aspartate aminotransferase and glutamate/aspartate-prephenate aminotransferase (PAT), found in Arabidopsis thaliana (Mouse-ear cress).